A 296-amino-acid chain; its full sequence is Fructose-bisphosphate aldolase class 1 (296 aa).

E175 functions as the Proton acceptor in the catalytic mechanism. Catalysis depends on K212, which acts as the Schiff-base intermediate with dihydroxyacetone-P.

This sequence belongs to the class I fructose-bisphosphate aldolase family.

It carries out the reaction beta-D-fructose 1,6-bisphosphate = D-glyceraldehyde 3-phosphate + dihydroxyacetone phosphate. Its pathway is carbohydrate degradation; glycolysis; D-glyceraldehyde 3-phosphate and glycerone phosphate from D-glucose: step 4/4. The chain is Fructose-bisphosphate aldolase class 1 (fda) from Staphylococcus carnosus (strain TM300).